Here is a 65-residue protein sequence, read N- to C-terminus: Large ribosomal subunit protein bL35 (65 aa).

The protein belongs to the bacterial ribosomal protein bL35 family.

The polypeptide is Large ribosomal subunit protein bL35 (Thermotoga maritima (strain ATCC 43589 / DSM 3109 / JCM 10099 / NBRC 100826 / MSB8)).